The primary structure comprises 323 residues: Homocysteine S-methyltransferase 1 (323 aa).

A Hcy-binding domain is found at 3–317 (VLEDLVARAG…STIRAVSKIL (315 aa)). The Zn(2+) site is built by Cys-235, Cys-302, and Cys-303.

In terms of assembly, monomer. Requires Zn(2+) as cofactor.

The catalysed reaction is S-methyl-L-methionine + L-homocysteine = 2 L-methionine + H(+). In terms of biological role, catalyzes methyl transfer from S-methylmethionine (SMM) to adenosyl-L-homocysteine (AdoMet). SMM degradation (by HMT-1, HMT-2, HMT-3 and HMT-4) and biosynthesis (by MMT1) constitute the SMM cycle in plants, which is probably required to achieve short term control of AdoMet level. The polypeptide is Homocysteine S-methyltransferase 1 (HMT-1) (Zea mays (Maize)).